The primary structure comprises 591 residues: Oxaloacetate decarboxylase alpha chain (591 aa).

One can recognise a Pyruvate carboxyltransferase domain in the interval 3-263; that stretch reads IAITDVVLRD…DTGLDILKLE (261 aa). The 74-residue stretch at 518 to 591 folds into the Biotinyl-binding domain; the sequence is PAGAGTPVTA…SVGDTLMTLA (74 aa). Lysine 557 is modified (N6-biotinyllysine).

As to quaternary structure, composed of three chains (alpha, beta, and gamma). Biotin is required as a cofactor.

The enzyme catalyses oxaloacetate + 2 Na(+)(in) + H(+) = pyruvate + 2 Na(+)(out) + CO2. In terms of biological role, catalyzes the decarboxylation of oxaloacetate coupled to Na(+) translocation. In Salmonella typhimurium (strain LT2 / SGSC1412 / ATCC 700720), this protein is Oxaloacetate decarboxylase alpha chain (oadA1).